The following is a 459-amino-acid chain: Cysteine--tRNA ligase (459 aa).

A Zn(2+)-binding site is contributed by C29. Positions 31-41 (PTVYDRAHIGN) match the 'HIGH' region motif. Residues C209, H234, and E238 each coordinate Zn(2+). A 'KMSKS' region motif is present at residues 267–271 (KMSKS). ATP is bound at residue K270.

It belongs to the class-I aminoacyl-tRNA synthetase family. As to quaternary structure, monomer. Zn(2+) is required as a cofactor.

It is found in the cytoplasm. The catalysed reaction is tRNA(Cys) + L-cysteine + ATP = L-cysteinyl-tRNA(Cys) + AMP + diphosphate. The protein is Cysteine--tRNA ligase of Rhodospirillum rubrum (strain ATCC 11170 / ATH 1.1.1 / DSM 467 / LMG 4362 / NCIMB 8255 / S1).